A 287-amino-acid polypeptide reads, in one-letter code: Protein REVEILLE 2 (287 aa).

Residues 31-85 (TITKQREKWTEAEHEKFVEALKLYGRAWRRIEEHVGTKTAVQIRSHAQKFFTKVA) enclose the HTH myb-type domain. The segment at residues 58-81 (WRRIEEHVGTKTAVQIRSHAQKFF) is a DNA-binding region (H-T-H motif). The interval 134–177 (QDEDNRSPTSVLSAHGSDGLGSIGSNSPNSSSAELSSHTEESLS) is disordered. The span at 156–169 (IGSNSPNSSSAELS) shows a compositional bias: low complexity.

It localises to the nucleus. Functionally, positive regulator for cold-responsive gene expression and cold tolerance. Part of a regulatory feedback loop that controls a subset of the circadian outputs and modulates the central oscillator. Negatively self-regulates its own expression. This is Protein REVEILLE 2 (RVE2) from Arabidopsis thaliana (Mouse-ear cress).